The chain runs to 346 residues: MANAYKQAGVDIEAGYEAVSRMKKHVQTTMRKEVLGGLGGFGGMFDLSKFALEEPVLVSGTDGVGTKLMLAFMADKHDTIGIDAVAMCVNDIVVQGAEPLFFLDYIACGKAEPSKIENIVKGISEGCRQAGCALIGGETAEMPGMYSTEEYDLAGFTVGIVDKKKIVTGEKIEAGHVLIGLASSGIHSNGYSLVRKVLLEDGELSLERIYGRLELPLGEELLKPTKIYVKPILELLKKHEVYGMAHITGGGFIENIPRMLPEGIGAEIELGSWEIQPIFSLLQEVGKLEEKEMFNIFNMGIGMVVAVKEEDAKDVVRLLEEQGEMARIIGRTIQGAGVTFNGGTAL.

It belongs to the AIR synthase family.

Its subcellular location is the cytoplasm. The enzyme catalyses 2-formamido-N(1)-(5-O-phospho-beta-D-ribosyl)acetamidine + ATP = 5-amino-1-(5-phospho-beta-D-ribosyl)imidazole + ADP + phosphate + H(+). It participates in purine metabolism; IMP biosynthesis via de novo pathway; 5-amino-1-(5-phospho-D-ribosyl)imidazole from N(2)-formyl-N(1)-(5-phospho-D-ribosyl)glycinamide: step 2/2. This is Phosphoribosylformylglycinamidine cyclo-ligase from Bacillus cereus (strain B4264).